We begin with the raw amino-acid sequence, 143 residues long: Small ribosomal subunit protein bS6 (143 aa).

Positions 98–143 (TEQSLIMKSKDEKGDKPERSERRRRDDEEGEAPAANDNDGDNAEAA) are disordered. Residues 105–124 (KSKDEKGDKPERSERRRRDD) show a composition bias toward basic and acidic residues.

Belongs to the bacterial ribosomal protein bS6 family.

Functionally, binds together with bS18 to 16S ribosomal RNA. In Xanthomonas euvesicatoria pv. vesicatoria (strain 85-10) (Xanthomonas campestris pv. vesicatoria), this protein is Small ribosomal subunit protein bS6.